We begin with the raw amino-acid sequence, 168 residues long: ATP synthase F(1) complex subunit delta, mitochondrial (168 aa).

Residues 1–22 constitute a mitochondrion transit peptide; it reads MLPAALLRHPGLRRLVLQARTY. Residues lysine 136 and lysine 165 each carry the N6-acetyllysine; alternate modification. An N6-succinyllysine; alternate mark is found at lysine 136 and lysine 165.

Belongs to the ATPase epsilon chain family. In terms of assembly, component of the ATP synthase complex composed at least of ATP5F1A/subunit alpha, ATP5F1B/subunit beta, ATP5MC1/subunit c (homooctomer), MT-ATP6/subunit a, MT-ATP8/subunit 8, ATP5ME/subunit e, ATP5MF/subunit f, ATP5MG/subunit g, ATP5MK/subunit k, ATP5MJ/subunit j, ATP5F1C/subunit gamma, ATP5F1D/subunit delta, ATP5F1E/subunit epsilon, ATP5PF/subunit F6, ATP5PB/subunit b, ATP5PD/subunit d, ATP5PO/subunit OSCP. ATP synthase complex consists of a soluble F(1) head domain (subunits alpha(3) and beta(3)) - the catalytic core - and a membrane F(0) domain - the membrane proton channel (subunits c, a, 8, e, f, g, k and j). These two domains are linked by a central stalk (subunits gamma, delta, and epsilon) rotating inside the F1 region and a stationary peripheral stalk (subunits F6, b, d, and OSCP). Component of a complex composed at least by ATPIF1, ATP5F1A, ATP5F1B, ATP5F1C AND ATP5F1E.

It localises to the mitochondrion. It is found in the mitochondrion inner membrane. Functionally, subunit delta, of the mitochondrial membrane ATP synthase complex (F(1)F(0) ATP synthase or Complex V) that produces ATP from ADP in the presence of a proton gradient across the membrane which is generated by electron transport complexes of the respiratory chain. ATP synthase complex consist of a soluble F(1) head domain - the catalytic core - and a membrane F(1) domain - the membrane proton channel. These two domains are linked by a central stalk rotating inside the F(1) region and a stationary peripheral stalk. During catalysis, ATP synthesis in the catalytic domain of F(1) is coupled via a rotary mechanism of the central stalk subunits to proton translocation. In vivo, can only synthesize ATP although its ATP hydrolase activity can be activated artificially in vitro. With the central stalk subunit gamma, is essential for the biogenesis of F(1) catalytic part of the ATP synthase complex namely in the formation of F1 assembly intermediate. The protein is ATP synthase F(1) complex subunit delta, mitochondrial of Rattus norvegicus (Rat).